Consider the following 311-residue polypeptide: Ribosomal RNA small subunit methyltransferase H (311 aa).

S-adenosyl-L-methionine contacts are provided by residues alanine 32–histidine 34, aspartate 52, phenylalanine 79, aspartate 100, and glutamine 107.

This sequence belongs to the methyltransferase superfamily. RsmH family.

The protein localises to the cytoplasm. It carries out the reaction cytidine(1402) in 16S rRNA + S-adenosyl-L-methionine = N(4)-methylcytidine(1402) in 16S rRNA + S-adenosyl-L-homocysteine + H(+). In terms of biological role, specifically methylates the N4 position of cytidine in position 1402 (C1402) of 16S rRNA. The protein is Ribosomal RNA small subunit methyltransferase H of Staphylococcus carnosus (strain TM300).